The following is a 291-amino-acid chain: UDP-N-acetylenolpyruvoylglucosamine reductase (291 aa).

The FAD-binding PCMH-type domain maps to 22–187 (RIGGPARYFK…ASATFQLTKD (166 aa)). R166 is an active-site residue. The active-site Proton donor is the C214. Residue E283 is part of the active site.

The protein belongs to the MurB family. It depends on FAD as a cofactor.

The protein resides in the cytoplasm. It carries out the reaction UDP-N-acetyl-alpha-D-muramate + NADP(+) = UDP-N-acetyl-3-O-(1-carboxyvinyl)-alpha-D-glucosamine + NADPH + H(+). It participates in cell wall biogenesis; peptidoglycan biosynthesis. Cell wall formation. The polypeptide is UDP-N-acetylenolpyruvoylglucosamine reductase (Chlamydia trachomatis serovar L2 (strain ATCC VR-902B / DSM 19102 / 434/Bu)).